The following is a 572-amino-acid chain: Moesin (572 aa).

The FERM domain occupies 1-294 (MPRGVAVRVT…GNHELYMRRR (294 aa)). 2 disordered regions span residues 444–508 (SQER…SYLP) and 523–544 (LQAM…QENI). Residues 454–475 (AQEAAAAQHAAQLAAQREAQQL) show a composition bias toward low complexity. The span at 480-502 (EGEEDEQDHELEVQQDDNDDLDD) shows a compositional bias: acidic residues. Residues 525-544 (AMKDESKGEDRYDKIHQENI) are compositionally biased toward basic and acidic residues.

It localises to the cell membrane. The protein resides in the cytoplasm. It is found in the cytoskeleton. Its subcellular location is the cell projection. Probably involved in connections of major cytoskeletal structures to the plasma membrane. The chain is Moesin from Lytechinus variegatus (Green sea urchin).